A 148-amino-acid polypeptide reads, in one-letter code: Large ribosomal subunit protein bL9 (148 aa).

It belongs to the bacterial ribosomal protein bL9 family.

Binds to the 23S rRNA. The sequence is that of Large ribosomal subunit protein bL9 from Listeria monocytogenes serotype 4a (strain HCC23).